The chain runs to 149 residues: UPF0178 protein lwe1471 (149 aa).

The protein belongs to the UPF0178 family.

This Listeria welshimeri serovar 6b (strain ATCC 35897 / DSM 20650 / CCUG 15529 / CIP 8149 / NCTC 11857 / SLCC 5334 / V8) protein is UPF0178 protein lwe1471.